The chain runs to 244 residues: Small ribosomal subunit protein uS3 (244 aa).

A KH type-2 domain is found at Ile-38 to Lys-106. A compositionally biased stretch (basic and acidic residues) spans Thr-222–Lys-235. Positions Thr-222–Arg-244 are disordered.

The protein belongs to the universal ribosomal protein uS3 family. As to quaternary structure, part of the 30S ribosomal subunit. Forms a tight complex with proteins S10 and S14.

Its function is as follows. Binds the lower part of the 30S subunit head. Binds mRNA in the 70S ribosome, positioning it for translation. This is Small ribosomal subunit protein uS3 from Parabacteroides distasonis (strain ATCC 8503 / DSM 20701 / CIP 104284 / JCM 5825 / NCTC 11152).